Reading from the N-terminus, the 535-residue chain is Dimethylaniline monooxygenase [N-oxide-forming] 2 (535 aa).

At Ala2 the chain carries N-acetylalanine. Residues 9–13, Glu32, 40–41, and 61–62 each bind FAD; these read GAGVS, VW, and NT. NADP(+) contacts are provided by residues 60–61 and 195–198; these read TN and SGSD. A Glycyl lysine isopeptide (Lys-Gly) (interchain with G-Cter in SUMO) cross-link involves residue Lys492. Residues 510–530 form a helical membrane-spanning segment; the sequence is FSVSFLLKILGLLAVVVAFFC.

The protein belongs to the FMO family. FAD serves as cofactor. Requires Mg(2+) as cofactor.

The protein resides in the microsome membrane. It localises to the endoplasmic reticulum membrane. In terms of biological role, catalyzes the oxidative metabolism of numerous xenobiotics, including mainly therapeutic drugs and insecticides that contain a soft nucleophile, most commonly nitrogen and sulfur and participates to their bioactivation. In Pan troglodytes (Chimpanzee), this protein is Dimethylaniline monooxygenase [N-oxide-forming] 2.